The chain runs to 396 residues: 2,3-diketo-5-methylthiopentyl-1-phosphate enolase (396 aa).

Residue Lys-85 is the Proton acceptor of the active site. Substrate-binding positions include Lys-134, 160–163 (KDDE), His-251, Gly-323, and 345–346 (GG). Mg(2+) is bound by residues Lys-160, Asp-162, and Glu-163. Position 160 is an N6-carboxylysine (Lys-160).

Belongs to the RuBisCO large chain family. Type IV subfamily. Homodimer. Mg(2+) is required as a cofactor.

It carries out the reaction 5-methylsulfanyl-2,3-dioxopentyl phosphate = 2-hydroxy-5-methylsulfanyl-3-oxopent-1-enyl phosphate. The protein operates within amino-acid biosynthesis; L-methionine biosynthesis via salvage pathway; L-methionine from S-methyl-5-thio-alpha-D-ribose 1-phosphate: step 3/6. Its function is as follows. Catalyzes the enolization of 2,3-diketo-5-methylthiopentyl-1-phosphate (DK-MTP-1-P) into 2-hydroxy-3-keto-5-methylthiopentenyl-1-phosphate (HK-MTPenyl-1-P). This is 2,3-diketo-5-methylthiopentyl-1-phosphate enolase from Exiguobacterium sibiricum (strain DSM 17290 / CCUG 55495 / CIP 109462 / JCM 13490 / 255-15).